The sequence spans 207 residues: MARYIGPKAKLSRREGTDLFLKSARRSLADKCKLDSKPGQHGRTSGARTSDYGTQLREKQKVKRIYGVLERQFRRYFAEADRRKGNTGENLLKLLESRLDNVVYRMGFGSTRAEARQLVSHKAITVNGVVANIPSLQVKAGDVIAVREQAKKQARILEALSLAEQGGLPQWVAVDSKKFEGTFKSMPERSDIAGDINESLIVELYSR.

The segment at 31 to 55 is disordered; sequence KCKLDSKPGQHGRTSGARTSDYGTQ. Polar residues predominate over residues 42–53; the sequence is GRTSGARTSDYG. The 64-residue stretch at 97 to 160 folds into the S4 RNA-binding domain; the sequence is SRLDNVVYRM…KKQARILEAL (64 aa).

The protein belongs to the universal ribosomal protein uS4 family. As to quaternary structure, part of the 30S ribosomal subunit. Contacts protein S5. The interaction surface between S4 and S5 is involved in control of translational fidelity.

In terms of biological role, one of the primary rRNA binding proteins, it binds directly to 16S rRNA where it nucleates assembly of the body of the 30S subunit. With S5 and S12 plays an important role in translational accuracy. This chain is Small ribosomal subunit protein uS4, found in Paraburkholderia phymatum (strain DSM 17167 / CIP 108236 / LMG 21445 / STM815) (Burkholderia phymatum).